Here is a 416-residue protein sequence, read N- to C-terminus: Gamma-glutamyl phosphate reductase (416 aa).

It belongs to the gamma-glutamyl phosphate reductase family.

The protein resides in the cytoplasm. It catalyses the reaction L-glutamate 5-semialdehyde + phosphate + NADP(+) = L-glutamyl 5-phosphate + NADPH + H(+). It functions in the pathway amino-acid biosynthesis; L-proline biosynthesis; L-glutamate 5-semialdehyde from L-glutamate: step 2/2. Catalyzes the NADPH-dependent reduction of L-glutamate 5-phosphate into L-glutamate 5-semialdehyde and phosphate. The product spontaneously undergoes cyclization to form 1-pyrroline-5-carboxylate. The chain is Gamma-glutamyl phosphate reductase from Salmonella schwarzengrund (strain CVM19633).